Reading from the N-terminus, the 495-residue chain is MPTESGSWAAARQTKQKRKSHSLSIKRTNSSEQDRLGLQRDMLEGQDSKLPPSVRNTLLELFGQIEREFENLYLENLELRREIDTLNDRLAVEGQAIDGAELSKGQMKTKASHSTSQLSQKLKTTYKASTSKIVSSFKTTTSRAICQLVKDYVGHRDGLWDVSVTRTQPVVLGTASADHTALLWSIETGKCLIKYVGHAGSVNSIKFHPTEQIALTASGDQTAHIWRYMVQLPTPQPMADTSQISGEEEVDFSDKDENDGDGDASSDCPTVRVPLTALKSHQGVVIAADWLVGGKQAVTASWDRTANLYDVETSELVHSLTGHDQELTHCCTHPTQRLVVTSSRDTTFRLWDFRDPSIHSVNVFQGHTDTVTSAVFTVGDNVVSGSDDRTVKVWDLKNMRSPIATIRTDSAVNRISVSVGQRIIALPHDNRQVRLFDISGVRLARLPRSNRQGHRRMVCCCAWSEDHPTCNLFSCGFDRQAIGWNINIPALLQEK.

A disordered region spans residues 1–34; sequence MPTESGSWAAARQTKQKRKSHSLSIKRTNSSEQD. Over residues 22–31 the composition is skewed to polar residues; it reads SLSIKRTNSS. WD repeat units lie at residues 154–194 and 197–236; these read GHRD…CLIK and GHAG…PTPQ. The segment at 237-268 is disordered; it reads PMADTSQISGEEEVDFSDKDENDGDGDASSDC. Over residues 246–264 the composition is skewed to acidic residues; that stretch reads GEEEVDFSDKDENDGDGDA. 5 WD repeats span residues 280–319, 322–361, 366–404, 407–446, and 453–494; these read SHQG…LVHS, GHDQ…IHSV, GHTD…SPIA, RTDS…LARL, and GHRR…LLQE.

Its subcellular location is the cytoplasm. It is found in the nucleus. The protein is WD repeat-containing protein 37 (wdr37) of Xenopus laevis (African clawed frog).